A 338-amino-acid polypeptide reads, in one-letter code: Mitochondrial amidoxime reducing component 2 (338 aa).

A mitochondrion-targeting transit peptide spans 1–35 (MGSSSSTALARLGLPGQPRSTWLGVAALGLAAVAL). Glycyl lysine isopeptide (Lys-Gly) (interchain with G-Cter in ubiquitin) cross-links involve residues Lys59, Lys138, and Lys144. An N6-acetyllysine; alternate modification is found at Lys156. A Glycyl lysine isopeptide (Lys-Gly) (interchain with G-Cter in ubiquitin); alternate cross-link involves residue Lys156. Glycyl lysine isopeptide (Lys-Gly) (interchain with G-Cter in ubiquitin) cross-links involve residues Lys173, Lys187, Lys289, and Lys296. Positions 188 to 336 (GRTTKKLYPS…LRVGDPVYRM (149 aa)) constitute an MOSC domain.

In terms of assembly, component of a complex composed of cytochrome b5, NADH-cytochrome b5 reductase (CYB5R3) and MTARC2. The cofactor is Mo-molybdopterin. Ubiquitinated by PRKN during mitophagy, leading to its degradation and enhancement of mitophagy. Deubiquitinated by USP30.

It is found in the mitochondrion outer membrane. It localises to the peroxisome. It catalyses the reaction N(omega)-hydroxy-L-arginine + 2 Fe(II)-[cytochrome b5] + 2 H(+) = L-arginine + 2 Fe(III)-[cytochrome b5] + H2O. Catalyzes the reduction of N-oxygenated molecules, acting as a counterpart of cytochrome P450 and flavin-containing monooxygenases in metabolic cycles. As a component of prodrug-converting system, reduces a multitude of N-hydroxylated prodrugs particularly amidoximes, leading to increased drug bioavailability. May be involved in mitochondrial N(omega)-hydroxy-L-arginine (NOHA) reduction, regulating endogenous nitric oxide levels and biosynthesis. Postulated to cleave the N-OH bond of N-hydroxylated substrates in concert with electron transfer from NADH to cytochrome b5 reductase then to cytochrome b5, the ultimate electron donor that primes the active site for substrate reduction. This chain is Mitochondrial amidoxime reducing component 2 (Mtarc2), found in Rattus norvegicus (Rat).